The following is a 214-amino-acid chain: Probable adenylyl-sulfate kinase (214 aa).

Residue 13-20 (GLSGAGKT) participates in ATP binding. The active-site Phosphoserine intermediate is the serine 87. Residues 174–199 (WNRTNTFPLKSRPNPPHRHKSKSSRA) are disordered.

It belongs to the APS kinase family.

The catalysed reaction is adenosine 5'-phosphosulfate + ATP = 3'-phosphoadenylyl sulfate + ADP + H(+). The protein operates within sulfur metabolism; hydrogen sulfide biosynthesis; sulfite from sulfate: step 2/3. Catalyzes the synthesis of activated sulfate. In Pseudomonas aeruginosa, this protein is Probable adenylyl-sulfate kinase.